The sequence spans 155 residues: uncharacterized protein (155 aa).

This sequence belongs to the mimivirus L6/L7/L57 family.

This is an uncharacterized protein from Acanthamoeba polyphaga (Amoeba).